We begin with the raw amino-acid sequence, 301 residues long: MNETKTIDVLDVKGKKAGSAELPGDLFDVNTNIPLIHQVVVAQLAAARQGTHATKTRGQVSGGGKKPWRQKGTGRARQGSTRAPQWVGGGTVHGPQPRSYAQRTPKKMVGAALRGALSDMARDNRIFVVTSLVDGDKPSTKQAKAVLSGLAELRKVLVVLDRSDEIDWLSVRNLSEVHVLAADQLNTYDVVNARTIVFSQAGLDAFVGARSANTQALSAQPEVPETNVADQHPYGEDSFRGDNPPAGFDIKGNEDSMKFHEPSSPWYGRTIAEVWFRSAAAAEAAGFVNAVKSDSEKEDAK.

The large ribosomal subunit protein uL4 stretch occupies residues 1–223; that stretch reads MNETKTIDVL…TQALSAQPEV (223 aa). A disordered region spans residues 49-105; sequence QGTHATKTRGQVSGGGKKPWRQKGTGRARQGSTRAPQWVGGGTVHGPQPRSYAQRTP. A unknown region spans residues 224 to 301; it reads PETNVADQHP…KSDSEKEDAK (78 aa).

This sequence belongs to the universal ribosomal protein uL4 family. Part of the 50S ribosomal subunit.

Its function is as follows. One of the primary rRNA binding proteins, this protein initially binds near the 5'-end of the 23S rRNA. It is important during the early stages of 50S assembly. It makes multiple contacts with different domains of the 23S rRNA in the assembled 50S subunit and ribosome. In terms of biological role, forms part of the polypeptide exit tunnel. This chain is Large ribosomal subunit protein uL4, found in Cutibacterium acnes (strain DSM 16379 / KPA171202) (Propionibacterium acnes).